We begin with the raw amino-acid sequence, 201 residues long: Protein GrpE (201 aa).

The protein belongs to the GrpE family. As to quaternary structure, homodimer.

The protein resides in the cytoplasm. In terms of biological role, participates actively in the response to hyperosmotic and heat shock by preventing the aggregation of stress-denatured proteins, in association with DnaK and GrpE. It is the nucleotide exchange factor for DnaK and may function as a thermosensor. Unfolded proteins bind initially to DnaJ; upon interaction with the DnaJ-bound protein, DnaK hydrolyzes its bound ATP, resulting in the formation of a stable complex. GrpE releases ADP from DnaK; ATP binding to DnaK triggers the release of the substrate protein, thus completing the reaction cycle. Several rounds of ATP-dependent interactions between DnaJ, DnaK and GrpE are required for fully efficient folding. The sequence is that of Protein GrpE from Shewanella frigidimarina (strain NCIMB 400).